A 203-amino-acid polypeptide reads, in one-letter code: uncharacterized protein (203 aa).

3 helical membrane-spanning segments follow: residues 60–80, 114–134, and 157–177; these read IIDM…FFLY, WFQL…YFCT, and LQLG…ALIL. 192-199 serves as a coordination point for ATP; the sequence is GAMSEGKT.

It localises to the membrane. This is an uncharacterized protein from Saccharomyces cerevisiae (strain ATCC 204508 / S288c) (Baker's yeast).